A 180-amino-acid polypeptide reads, in one-letter code: Regulator of G-protein signaling 8 (180 aa).

S26 carries the post-translational modification Phosphoserine. One can recognise an RGS domain in the interval 56–171 (SFDVLLSHKY…FLRSKMYLDL (116 aa)).

Interacts with GNAO1 and GNAI3.

It localises to the cell membrane. The protein resides in the membrane. Its subcellular location is the perikaryon. The protein localises to the cell projection. It is found in the dendrite. It localises to the nucleus. In terms of biological role, regulates G protein-coupled receptor signaling cascades, including signaling via muscarinic acetylcholine receptor CHRM2 and dopamine receptor DRD2. Inhibits signal transduction by increasing the GTPase activity of G protein alpha subunits, thereby driving them into their inactive GDP-bound form. Modulates the activity of potassium channels that are activated in response to DRD2 and CHRM2 signaling. This chain is Regulator of G-protein signaling 8 (Rgs8), found in Mus musculus (Mouse).